Consider the following 461-residue polypeptide: Tubulin gamma-1 chain (461 aa).

142–148 (AGGTGSG) is a GTP binding site.

The protein belongs to the tubulin family.

It localises to the cytoplasm. Its subcellular location is the cytoskeleton. It is found in the microtubule organizing center. The protein resides in the centrosome. Tubulin is the major constituent of microtubules. The gamma chain is found at microtubule organizing centers (MTOC) such as the spindle poles or the centrosome, suggesting that it is involved in the minus-end nucleation of microtubule assembly. This is Tubulin gamma-1 chain from Euplotoides octocarinatus (Freshwater ciliate).